A 392-amino-acid chain; its full sequence is Small ribosomal subunit protein bS1 (392 aa).

4 S1 motif domains span residues 16–90 (GDKV…LSKR), 108–173 (DEVI…LSRK), 194–262 (GDVI…LSIK), and 279–348 (DDVI…LSIK). Positions 361–380 (ASTTQSYLEDDNDEDKPTLG) are disordered.

The protein belongs to the bacterial ribosomal protein bS1 family.

In terms of biological role, binds mRNA; thus facilitating recognition of the initiation point. It is needed to translate mRNA with a short Shine-Dalgarno (SD) purine-rich sequence. This Staphylococcus epidermidis (strain ATCC 35984 / DSM 28319 / BCRC 17069 / CCUG 31568 / BM 3577 / RP62A) protein is Small ribosomal subunit protein bS1 (rpsA).